The primary structure comprises 1612 residues: DNA (cytosine-5)-methyltransferase PliMCI (1612 aa).

A DMAP1-binding domain is found at 7–101 (CDQVIPPNVR…NGDTKEEASS (95 aa)). Residues 87–338 (TCSPVNGDTK…TAESKQPPLR (252 aa)) are disordered. The span at 94–110 (DTKEEASSNGKDDEKAE) shows a compositional bias: basic and acidic residues. Residues 115–131 (NGTTSNGSTTNGSSGSS) are compositionally biased toward low complexity. Residues 132–142 (KANGHTNGGYV) show a composition bias toward polar residues. Low complexity predominate over residues 143–154 (QSSSQEETGTSQ). Composition is skewed to basic and acidic residues over residues 193 to 212 (VLGD…KKDV), 222 to 232 (EESATPDEKTL), and 260 to 289 (KKEE…KKEE). The CXXC-type zinc finger occupies 626 to 672 (ASERKKRCGVCEICQAPDCGKCTACKDMIKFGGSGKAKQACKDRRCP). The Zn(2+) site is built by cysteine 633, cysteine 636, cysteine 639, cysteine 644, cysteine 647, cysteine 650, cysteine 666, and cysteine 671. The segment at 677–708 (QEADENDIDEMDNSSNKENKDEKKAKKGRKLE) is disordered. A compositionally biased stretch (acidic residues) spans 678–688 (EADENDIDEMD). The span at 691 to 708 (SNKENKDEKKAKKGRKLE) shows a compositional bias: basic and acidic residues. 2 BAH domains span residues 743 to 871 (EKIE…EDYE) and 967 to 1089 (NYRK…EDPP). The segment at 1084-1121 (CFEDPPSKSRSTRMKGKGKGKGKGKAKGKIAVEKEEEK) is disordered. Basic residues predominate over residues 1093–1111 (RSTRMKGKGKGKGKGKAKG). Residues 1131–1590 (LKCLDVFAGC…MEIKVCLQTK (460 aa)) enclose the SAM-dependent MTase C5-type domain. Residues 1142 to 1143 (GL), 1160 to 1161 (EK), 1182 to 1183 (DC), and cysteine 1183 contribute to the S-adenosyl-L-methionine site. Cysteine 1218 is an active-site residue. The S-adenosyl-L-methionine site is built by asparagine 1569 and valine 1571.

The protein belongs to the class I-like SAM-binding methyltransferase superfamily. C5-methyltransferase family.

Its subcellular location is the nucleus. The enzyme catalyses a 2'-deoxycytidine in DNA + S-adenosyl-L-methionine = a 5-methyl-2'-deoxycytidine in DNA + S-adenosyl-L-homocysteine + H(+). Its function is as follows. Methylates CpG residues. The chain is DNA (cytosine-5)-methyltransferase PliMCI (DNMT) from Paracentrotus lividus (Common sea urchin).